A 334-amino-acid polypeptide reads, in one-letter code: Fructose-1,6-bisphosphatase class 1 (334 aa).

The Mg(2+) site is built by Glu-87, Asp-106, Leu-108, and Asp-109. Substrate-binding positions include 109 to 112 (DGSS), Asn-208, and Lys-274. Glu-280 contacts Mg(2+).

Belongs to the FBPase class 1 family. As to quaternary structure, homotetramer. Mg(2+) serves as cofactor.

It localises to the cytoplasm. It carries out the reaction beta-D-fructose 1,6-bisphosphate + H2O = beta-D-fructose 6-phosphate + phosphate. It functions in the pathway carbohydrate biosynthesis; gluconeogenesis. In Psychrobacter sp. (strain PRwf-1), this protein is Fructose-1,6-bisphosphatase class 1.